Reading from the N-terminus, the 200-residue chain is Large ribosomal subunit protein bL9 (200 aa).

Belongs to the bacterial ribosomal protein bL9 family.

In terms of biological role, binds to the 23S rRNA. The chain is Large ribosomal subunit protein bL9 from Ruegeria pomeroyi (strain ATCC 700808 / DSM 15171 / DSS-3) (Silicibacter pomeroyi).